The primary structure comprises 490 residues: MPSLIPPIVSASSASNSAALDHLYHHQPPPRLPLGAVPQSPIQSQAPPPPHLHPPSHHFQLHPGHGHHQQPHHERDHRLPPPVASYSAHSHHLQHDPLPQRLESSQPGHPGAAEHRDHPQHALDEPSRSHDPYPSMATGALVHSESQQPASASLLLPISNVEEATGRRYHLDVVQQPRRARMCGFGDKDRRPITPPPCVRLIIIDVATGKEIDCNDIDHSMFVLNVDLWNEDGTREVNLVRSSTSSSPSVSSTVTYPYGSISVGESSHTYGQSAHPPSREAPYSVSQTASYAPEYQTQPTYSQGSSAYPSNGTYGPPQQYFPQHQAYRTETGPPGAMQTTVGGFRGYAQDQNALTKMAVVGGQPQGMFTRNLIGSLAASAFRLADTSEHLGIWFVLQDLSVRTEGPFRLRFSFVNVGPLAGQNGAKVNTGRAPILASCFSEVFNVYSAKKFPGVCESTPLSKTFAAQGIKIPIRKDANLKGGDGEDDYGD.

Disordered regions lie at residues 23–148 and 295–316; these read LYHH…ESQQ and YQTQ…TYGP. Over residues 54 to 70 the composition is skewed to basic residues; sequence PPSHHFQLHPGHGHHQQ. Over residues 112–131 the composition is skewed to basic and acidic residues; that stretch reads AAEHRDHPQHALDEPSRSHD. The Velvet domain maps to 164-474; the sequence is ATGRRYHLDV…AAQGIKIPIR (311 aa). Positions 295–313 are enriched in polar residues; sequence YQTQPTYSQGSSAYPSNGT.

It belongs to the velvet family. VelB subfamily. In terms of assembly, component of the heterotrimeric velvet complex composed of LAE1, VEL1 and VEL2; VEL1 acting as a bridging protein between LAE1 and VEL2. Forms a heterodimeric complex with VOS1; the formation of the VEL2-VOS1 complex is light-dependent.

Its subcellular location is the nucleus. It is found in the cytoplasm. Component of the velvet transcription factor complex that controls sexual/asexual developmental ratio in response to light, promoting sexual development in the darkness while stimulating asexual sporulation under illumination. The velvet complex acts as a global regulator for secondary metabolite gene expression. Component of the VEL2-VOS1 heterodimeric complex that plays a dual role in activating genes associated with spore maturation and repressing certain development-associated genes. The VEL2-VOS1 complex binds DNA through the DNA-binding domain of VOS1 that recognizes an 11-nucleotide consensus sequence 5'-CTGGCCGCGGC-3' consisting of two motifs in the promoters of key developmental regulatory genes. Regulates expression of cellulase-encoding genes such as the cellobiohydrolase-encoding genes cbh1 and cbh2, the endo-beta-1,4-glucanase-encoding genes egl1 and egl2, and the beta-glucosidase-encoding gene bgl1. This Hypocrea jecorina (strain QM6a) (Trichoderma reesei) protein is Velvet complex subunit 2.